The primary structure comprises 264 residues: S-adenosylmethionine decarboxylase proenzyme (264 aa).

Catalysis depends on Ser-112, which acts as the Schiff-base intermediate with substrate; via pyruvic acid. Ser-112 bears the Pyruvic acid (Ser); by autocatalysis mark. His-117 serves as the catalytic Proton acceptor; for processing activity. Cys-140 serves as the catalytic Proton donor; for catalytic activity.

Belongs to the prokaryotic AdoMetDC family. Type 2 subfamily. Heterooctamer of four alpha and four beta chains arranged as a tetramer of alpha/beta heterodimers. Pyruvate is required as a cofactor. Is synthesized initially as an inactive proenzyme. Formation of the active enzyme involves a self-maturation process in which the active site pyruvoyl group is generated from an internal serine residue via an autocatalytic post-translational modification. Two non-identical subunits are generated from the proenzyme in this reaction, and the pyruvate is formed at the N-terminus of the alpha chain, which is derived from the carboxyl end of the proenzyme. The post-translation cleavage follows an unusual pathway, termed non-hydrolytic serinolysis, in which the side chain hydroxyl group of the serine supplies its oxygen atom to form the C-terminus of the beta chain, while the remainder of the serine residue undergoes an oxidative deamination to produce ammonia and the pyruvoyl group blocking the N-terminus of the alpha chain.

It catalyses the reaction S-adenosyl-L-methionine + H(+) = S-adenosyl 3-(methylsulfanyl)propylamine + CO2. Its pathway is amine and polyamine biosynthesis; S-adenosylmethioninamine biosynthesis; S-adenosylmethioninamine from S-adenosyl-L-methionine: step 1/1. Catalyzes the decarboxylation of S-adenosylmethionine to S-adenosylmethioninamine (dcAdoMet), the propylamine donor required for the synthesis of the polyamines spermine and spermidine from the diamine putrescine. The sequence is that of S-adenosylmethionine decarboxylase proenzyme from Salmonella choleraesuis (strain SC-B67).